The primary structure comprises 727 residues: Epithelial splicing regulatory protein 2 (727 aa).

Residues 1-22 (MTPPPPPPPPPGPDPAADPAAD) are disordered. Ser-83 is subject to Phosphoserine. RRM domains lie at 257–353 (TVVR…RFLS), 358–438 (VILR…RSTA), and 475–555 (DCVR…PCST). Ser-573 is modified (phosphoserine).

Belongs to the ESRP family. Interacts with RBPMS. In terms of tissue distribution, epithelial cell-specific.

The protein localises to the nucleus. Its function is as follows. mRNA splicing factor that regulates the formation of epithelial cell-specific isoforms. Specifically regulates the expression of FGFR2-IIIb, an epithelial cell-specific isoform of FGFR2. Also regulates the splicing of CD44, CTNND1, ENAH, 3 transcripts that undergo changes in splicing during the epithelial-to-mesenchymal transition (EMT). Acts by directly binding specific sequences in mRNAs. Binds the GU-rich sequence motifs in the ISE/ISS-3, a cis-element regulatory region present in the mRNA of FGFR2. The sequence is that of Epithelial splicing regulatory protein 2 (ESRP2) from Homo sapiens (Human).